The primary structure comprises 238 residues: Probable transcriptional regulatory protein SSU98_0387 (238 aa).

The protein belongs to the TACO1 family. YeeN subfamily.

The protein resides in the cytoplasm. This Streptococcus suis (strain 98HAH33) protein is Probable transcriptional regulatory protein SSU98_0387.